Here is a 229-residue protein sequence, read N- to C-terminus: GTP:AMP phosphotransferase (229 aa).

10–15 (GVGKGT) provides a ligand contact to a ribonucleoside 5'-triphosphate. The NMP stretch occupies residues 30 to 59 (NVGNILRNEIKKESNIGKEVQNVVRSGNLV). Residues R36, 57-59 (NLV), G87, 87-90 (GFPR), and Q94 each bind AMP. The LID stretch occupies residues 123 to 170 (GRRICNICDKNFNVSNIQQDSFDMPPILPSKDCIQCNGHTNLIKRKDD). R178 lines the AMP pocket.

The protein belongs to the adenylate kinase family.

Its subcellular location is the mitochondrion. It catalyses the reaction a ribonucleoside 5'-triphosphate + AMP = a ribonucleoside 5'-diphosphate + ADP. It carries out the reaction GTP + AMP = GDP + ADP. Inhibited by the dinucleoside pentaphosphate compound P1,P5-di(guanosine-5') pentaphosphate (GP5A). Functionally, catalyzes the reversible transfer of the terminal phosphate group between GTP and AMP. Has very low activity with UTP, ITP, CTP and IMP and no activity with ATP, GMP, CMP and UMP in vitro. This is GTP:AMP phosphotransferase from Plasmodium falciparum (isolate 3D7).